A 356-amino-acid polypeptide reads, in one-letter code: Alternative oxidase, mitochondrial (356 aa).

Residues 152 to 172 form a helical membrane-spanning segment; that stretch reads VIRFIFLETVAGVPGMVGGML. Glu-159, Glu-198, and His-201 together coordinate Fe cation. The chain crosses the membrane as a helical span at residues 217–237; it reads LMVLGAQGVFFNGFFISYLIS. Fe cation contacts are provided by Glu-249, Glu-304, and His-307. A disordered region spans residues 330–356; sequence YDNPEAPHPTKSAEIVKPTGWERDEVI.

Belongs to the alternative oxidase family. Requires Fe cation as cofactor.

It localises to the mitochondrion inner membrane. Catalyzes cyanide-resistant oxygen consumption. May increase respiration when the cytochrome respiratory pathway is restricted, or in response to low temperatures. This Ajellomyces capsulatus (Darling's disease fungus) protein is Alternative oxidase, mitochondrial (AOX1).